A 79-amino-acid chain; its full sequence is UPF0154 protein SSP1415 (79 aa).

Residues 4–24 (WLAIVLIVLALILGLVGGFFL) form a helical membrane-spanning segment.

It belongs to the UPF0154 family.

Its subcellular location is the membrane. This chain is UPF0154 protein SSP1415, found in Staphylococcus saprophyticus subsp. saprophyticus (strain ATCC 15305 / DSM 20229 / NCIMB 8711 / NCTC 7292 / S-41).